We begin with the raw amino-acid sequence, 483 residues long: Sodium/pantothenate symporter (483 aa).

Residues 1 to 2 (MQ) lie on the Periplasmic side of the membrane. Residues 3-23 (LEVILPLVAYLVVVFGISVYA) traverse the membrane as a helical segment. The Cytoplasmic portion of the chain corresponds to 24–42 (MRKRSTGTFLNEYFLGSRS). A helical transmembrane segment spans residues 43–63 (MGGIVLAMTLTATYISASSFI). Topologically, residues 64–73 (GGPGAAYKYG) are periplasmic. The helical transmembrane segment at 74 to 94 (LGWVLLAMIQLPAVWLSLGIL) threads the bilayer. Over 95 to 123 (GKKFAILARRYNAVTLNDMLFARYQSRLL) the chain is Cytoplasmic. A helical membrane pass occupies residues 124 to 144 (VWLASLSLLVAFVGAMTVQFI). Topologically, residues 145–157 (GGARLLETAAGIP) are periplasmic. A helical transmembrane segment spans residues 158–178 (YETGLLIFGISIALYTAFGGF). Residues 179 to 189 (RASVLNDTMQG) lie on the Cytoplasmic side of the membrane. A helical membrane pass occupies residues 190–210 (LVMLIGTVVLLIGVVHAAGGL). Over 211–232 (SNAVQTLQTIDPQLVTPQGADD) the chain is Periplasmic. A helical transmembrane segment spans residues 233–253 (ILSPAFMTSFWVLVCFGVIGL). Topologically, residues 254–272 (PHTAVRCISYKDSKAVHRG) are cytoplasmic. The chain crosses the membrane as a helical span at residues 273 to 293 (IIIGTIVVAILMFGMHLAGAL). Over 294–305 (GRAVIPDLTVPD) the chain is Periplasmic. The chain crosses the membrane as a helical span at residues 306–326 (LVIPTLMVKVLPPFAAGIFLA). Topologically, residues 327 to 368 (APMAAIMSTINAQLLQSSATIIKDLYLNIRPDQMQNETRLKR) are cytoplasmic. The helical transmembrane segment at 369-389 (MSAVITLVLGALLLLAAWKPP) threads the bilayer. The Periplasmic portion of the chain corresponds to 390 to 391 (EM). A helical transmembrane segment spans residues 392-412 (IIWLNLLAFGGLEAVFLWPLV). Topologically, residues 413–423 (LGLYWERANAK) are cytoplasmic. A helical membrane pass occupies residues 424–444 (GALSAMIVGGVLYAVLATLNI). Position 445 (Gln445) is a topological domain, periplasmic. Residues 446-466 (YLGFHPIVPSLLLSLLAFLVG) form a helical membrane-spanning segment. Residues 467–483 (NRFGTSVPQATVLTTDK) are Cytoplasmic-facing.

The protein belongs to the sodium:solute symporter (SSF) (TC 2.A.21) family.

The protein resides in the cell inner membrane. The catalysed reaction is (R)-pantothenate(in) + Na(+)(in) = (R)-pantothenate(out) + Na(+)(out). Its activity is regulated as follows. Pantothenate uptake is not reduced in osmotically shocked cells or by ATP depletion with arsenate, but is reduced greater than 90% by the dissipation of the membrane electrochemical gradient with 2,4-dinitrophenol. In terms of biological role, catalyzes the sodium-dependent uptake of extracellular pantothenate. In Escherichia coli (strain K12), this protein is Sodium/pantothenate symporter.